We begin with the raw amino-acid sequence, 1317 residues long: DNA-directed RNA polymerase subunit beta' (1317 aa).

Residues Cys-214, Cys-286, Cys-293, and Cys-296 each contribute to the Zn(2+) site. Residues 1279–1317 (RAYAGTQLSQDDEEFEETYDTDEDDFDMDDDDDFGDDED) are disordered. Over residues 1288–1317 (QDDEEFEETYDTDEDDFDMDDDDDFGDDED) the composition is skewed to acidic residues.

Belongs to the RNA polymerase beta' chain family. RpoC2 subfamily. In cyanobacteria the RNAP catalytic core is composed of 2 alpha, 1 beta, 1 beta', 1 gamma and 1 omega subunit. When a sigma factor is associated with the core the holoenzyme is formed, which can initiate transcription. The cofactor is Zn(2+).

The enzyme catalyses RNA(n) + a ribonucleoside 5'-triphosphate = RNA(n+1) + diphosphate. In terms of biological role, DNA-dependent RNA polymerase catalyzes the transcription of DNA into RNA using the four ribonucleoside triphosphates as substrates. This is DNA-directed RNA polymerase subunit beta' from Synechocystis sp. (strain ATCC 27184 / PCC 6803 / Kazusa).